We begin with the raw amino-acid sequence, 154 residues long: Ribosome maturation factor RimP (154 aa).

The protein belongs to the RimP family.

The protein resides in the cytoplasm. Its function is as follows. Required for maturation of 30S ribosomal subunits. This chain is Ribosome maturation factor RimP, found in Prochlorococcus marinus (strain MIT 9313).